Here is a 927-residue protein sequence, read N- to C-terminus: Probable RNA-dependent RNA polymerase 4 (927 aa).

The interval 98-135 (GESPVQFPRTPGKKSCRASQAEVSLDREDPSPKFLRGD) is disordered. Over residues 121–135 (SLDREDPSPKFLRGD) the composition is skewed to basic and acidic residues.

This sequence belongs to the RdRP family.

It catalyses the reaction RNA(n) + a ribonucleoside 5'-triphosphate = RNA(n+1) + diphosphate. Its function is as follows. Probably involved in the RNA silencing pathway and required for the generation of small interfering RNAs (siRNAs). This chain is Probable RNA-dependent RNA polymerase 4 (RDR4), found in Arabidopsis thaliana (Mouse-ear cress).